Here is a 225-residue protein sequence, read N- to C-terminus: uncharacterized protein (225 aa).

This is an uncharacterized protein from Schizosaccharomyces pombe (strain 972 / ATCC 24843) (Fission yeast).